The chain runs to 31 residues: Kallikrein-1 (31 aa).

The Peptidase S1 domain maps to 1–31; sequence VIGGQECARDSHPWQAAVYHFSDIECGGVLV.

This sequence belongs to the peptidase S1 family. Kallikrein subfamily.

The catalysed reaction is Preferential cleavage of Arg-|-Xaa bonds in small molecule substrates. Highly selective action to release kallidin (lysyl-bradykinin) from kininogen involves hydrolysis of Met-|-Xaa or Leu-|-Xaa.. In terms of biological role, glandular kallikreins cleave Met-Lys and Arg-Ser bonds in kininogen to release Lys-bradykinin. This Cavia porcellus (Guinea pig) protein is Kallikrein-1.